The following is a 431-amino-acid chain: Histidinol dehydrogenase (431 aa).

Residues tyrosine 127, glutamine 189, and asparagine 212 each contribute to the NAD(+) site. Positions 237, 259, and 262 each coordinate substrate. The Zn(2+) site is built by glutamine 259 and histidine 262. Catalysis depends on proton acceptor residues glutamate 326 and histidine 327. Positions 327, 360, 414, and 419 each coordinate substrate. Aspartate 360 provides a ligand contact to Zn(2+). Position 419 (histidine 419) interacts with Zn(2+).

This sequence belongs to the histidinol dehydrogenase family. The cofactor is Zn(2+).

The catalysed reaction is L-histidinol + 2 NAD(+) + H2O = L-histidine + 2 NADH + 3 H(+). The protein operates within amino-acid biosynthesis; L-histidine biosynthesis; L-histidine from 5-phospho-alpha-D-ribose 1-diphosphate: step 9/9. In terms of biological role, catalyzes the sequential NAD-dependent oxidations of L-histidinol to L-histidinaldehyde and then to L-histidine. The sequence is that of Histidinol dehydrogenase from Xylella fastidiosa (strain 9a5c).